A 443-amino-acid polypeptide reads, in one-letter code: UDP-N-acetylglucosamine 1-carboxyvinyltransferase 1 (443 aa).

Lys22 to Asn23 lines the phosphoenolpyruvate pocket. Arg95 serves as a coordination point for UDP-N-acetyl-alpha-D-glucosamine. Cys119 functions as the Proton donor in the catalytic mechanism. 2-(S-cysteinyl)pyruvic acid O-phosphothioketal is present on Cys119. Residues Arg124 to Leu128, Asp308, and Val330 contribute to the UDP-N-acetyl-alpha-D-glucosamine site.

The protein belongs to the EPSP synthase family. MurA subfamily.

It is found in the cytoplasm. The catalysed reaction is phosphoenolpyruvate + UDP-N-acetyl-alpha-D-glucosamine = UDP-N-acetyl-3-O-(1-carboxyvinyl)-alpha-D-glucosamine + phosphate. Its pathway is cell wall biogenesis; peptidoglycan biosynthesis. Its function is as follows. Cell wall formation. Adds enolpyruvyl to UDP-N-acetylglucosamine. The sequence is that of UDP-N-acetylglucosamine 1-carboxyvinyltransferase 1 from Oceanobacillus iheyensis (strain DSM 14371 / CIP 107618 / JCM 11309 / KCTC 3954 / HTE831).